A 557-amino-acid chain; its full sequence is Urocanate hydratase (557 aa).

Residues 1-20 (MSNPRHNEREVRSPRGDELN) are disordered. Residues 52 to 53 (GG), glutamine 130, 176 to 178 (GMG), glutamate 196, arginine 201, 242 to 243 (NA), 263 to 267 (QTSAH), 273 to 274 (YL), and tyrosine 322 contribute to the NAD(+) site. Residue cysteine 410 is part of the active site. Residue glycine 492 coordinates NAD(+).

The protein belongs to the urocanase family. It depends on NAD(+) as a cofactor.

It is found in the cytoplasm. It catalyses the reaction 4-imidazolone-5-propanoate = trans-urocanate + H2O. It functions in the pathway amino-acid degradation; L-histidine degradation into L-glutamate; N-formimidoyl-L-glutamate from L-histidine: step 2/3. Catalyzes the conversion of urocanate to 4-imidazolone-5-propionate. The protein is Urocanate hydratase of Brucella melitensis biotype 2 (strain ATCC 23457).